Reading from the N-terminus, the 340-residue chain is DNA-directed RNA polymerase subunit alpha (340 aa).

An alpha N-terminal domain (alpha-NTD) region spans residues 1-226 (MLIAQRPSLT…ELFGLARELN (226 aa)). Residues 243 to 340 (LAADLALPIE…DAGFVETEQY (98 aa)) are alpha C-terminal domain (alpha-CTD).

Belongs to the RNA polymerase alpha chain family. As to quaternary structure, homodimer. The RNAP catalytic core consists of 2 alpha, 1 beta, 1 beta' and 1 omega subunit. When a sigma factor is associated with the core the holoenzyme is formed, which can initiate transcription.

The catalysed reaction is RNA(n) + a ribonucleoside 5'-triphosphate = RNA(n+1) + diphosphate. Functionally, DNA-dependent RNA polymerase catalyzes the transcription of DNA into RNA using the four ribonucleoside triphosphates as substrates. This Streptomyces avermitilis (strain ATCC 31267 / DSM 46492 / JCM 5070 / NBRC 14893 / NCIMB 12804 / NRRL 8165 / MA-4680) protein is DNA-directed RNA polymerase subunit alpha.